A 432-amino-acid chain; its full sequence is Histidine--tRNA ligase (432 aa).

This sequence belongs to the class-II aminoacyl-tRNA synthetase family.

The protein resides in the cytoplasm. It catalyses the reaction tRNA(His) + L-histidine + ATP = L-histidyl-tRNA(His) + AMP + diphosphate + H(+). This Pyrococcus furiosus (strain ATCC 43587 / DSM 3638 / JCM 8422 / Vc1) protein is Histidine--tRNA ligase.